We begin with the raw amino-acid sequence, 337 residues long: Mortality factor related protein 1 (337 aa).

The Tudor-knot domain occupies 7-55 (FEVGENVACIYKGKPYDAKITDIKTNSDGKELYCVHFKGWNNRYDEKIP). The tract at residues 75–113 (HNAELPTTALKPKKKSLAAEAPRDDRDDTPGTSKGKKAK) is disordered. The MRG domain maps to 122–327 (TADDMKVELP…ASNDYYRRSL (206 aa)).

As to quaternary structure, component of the SIN3S complex, which contains at least sin-3, hda-1, athp-1 and mrg-1. Interacts with cfp-1, a component of the SET2 complex. Interacts with rfp-1. As to expression, expressed in oocytes (at protein level). Expressed mainly in germ cells, but also at lower levels in several somatic cell types, including intestinal cells.

Its subcellular location is the nucleus. The protein localises to the chromosome. In terms of biological role, protein involved in the remodeling of chromatin thereby regulating various processes including transcription, chromosome synapsis and genome integrity. Mainly binds genomic loci carrying trimethylated histone H3 'Lys-36' (H3K36me3) or 'Lys-4' (H3K4me3), and acetylated histone H3 'Lys-9' (H3K9ac), 'Lys-27' (H3K27ac). During meiosis, required for the presynaptic pairing of homologous chromosomal regions outside of the pairing center and for the progression of chromosome synapsis. Essential maternal factor required in postembryonic germline development and in maintaining germ cell identity. Plays an important role in maintaining genomic integrity in primordial germ cells (PGCs) during meiosis by regulating DNA double-strand break (DSB) repair and synapsis. Also, required for chromatin-based transcriptional silencing in PGCs and for silencing of X-linked genes in the maternal germ line. By retaining histone acetyltransferase, cbp-1, in euchromatin, promotes the anchoring of heterochromatin at the inner nuclear membrane in intestinal and hypodermal cells. The chain is Mortality factor related protein 1 from Caenorhabditis elegans.